The chain runs to 257 residues: Acetylglutamate kinase (257 aa).

Substrate is bound by residues 43–44 (GG), R65, and N157. ATP-binding positions include 180 to 185 (DVSGIL) and 208 to 210 (IIT).

This sequence belongs to the acetylglutamate kinase family. ArgB subfamily. As to quaternary structure, homodimer.

It is found in the cytoplasm. The catalysed reaction is N-acetyl-L-glutamate + ATP = N-acetyl-L-glutamyl 5-phosphate + ADP. It participates in amino-acid biosynthesis; L-arginine biosynthesis; N(2)-acetyl-L-ornithine from L-glutamate: step 2/4. Catalyzes the ATP-dependent phosphorylation of N-acetyl-L-glutamate. The sequence is that of Acetylglutamate kinase from Salmonella schwarzengrund (strain CVM19633).